The following is a 549-amino-acid chain: Dihydroxy-acid dehydratase (549 aa).

Mg(2+) is bound at residue aspartate 78. [2Fe-2S] cluster is bound at residue cysteine 119. Mg(2+) is bound by residues aspartate 120 and lysine 121. Position 121 is an N6-carboxylysine (lysine 121). Cysteine 192 is a binding site for [2Fe-2S] cluster. Glutamate 439 is a binding site for Mg(2+). Serine 465 serves as the catalytic Proton acceptor.

The protein belongs to the IlvD/Edd family. Homodimer. Requires [2Fe-2S] cluster as cofactor. The cofactor is Mg(2+).

It catalyses the reaction (2R)-2,3-dihydroxy-3-methylbutanoate = 3-methyl-2-oxobutanoate + H2O. It carries out the reaction (2R,3R)-2,3-dihydroxy-3-methylpentanoate = (S)-3-methyl-2-oxopentanoate + H2O. The protein operates within amino-acid biosynthesis; L-isoleucine biosynthesis; L-isoleucine from 2-oxobutanoate: step 3/4. It participates in amino-acid biosynthesis; L-valine biosynthesis; L-valine from pyruvate: step 3/4. Functionally, functions in the biosynthesis of branched-chain amino acids. Catalyzes the dehydration of (2R,3R)-2,3-dihydroxy-3-methylpentanoate (2,3-dihydroxy-3-methylvalerate) into 2-oxo-3-methylpentanoate (2-oxo-3-methylvalerate) and of (2R)-2,3-dihydroxy-3-methylbutanoate (2,3-dihydroxyisovalerate) into 2-oxo-3-methylbutanoate (2-oxoisovalerate), the penultimate precursor to L-isoleucine and L-valine, respectively. The protein is Dihydroxy-acid dehydratase of Endomicrobium trichonymphae.